The sequence spans 99 residues: UPF0235 protein Avin_03050 (99 aa).

The disordered stretch occupies residues 66 to 99; that stretch reads VSLESGESNRQKRVRIRRPRQLPALPGLAPRPDA. Residues 76-85 are compositionally biased toward basic residues; the sequence is QKRVRIRRPR.

The protein belongs to the UPF0235 family.

This Azotobacter vinelandii (strain DJ / ATCC BAA-1303) protein is UPF0235 protein Avin_03050.